The chain runs to 210 residues: MQVKNPILGLCQKATFALSAAKVEQCPDDQGYEVAFAGRSNAGKSSALNTLTHASLARTSKTPGRTQLLNFFSLDDERRLVDLPGYGYAKVPIPLKQHWQRHLEAYLGSRECLRGVILMMDVRHPMTDFDKMMLDWARASGMPMHILLTKADKLTHGAGKNTLLKVQSEIRKGWGDGVTIQLFSAPKRLGLEEAYKVLAGWMELEDKPVA.

Residues 30 to 204 form the EngB-type G domain; that stretch reads QGYEVAFAGR…YKVLAGWMEL (175 aa). Residues 38–45, 64–68, 82–85, 149–152, and 182–185 contribute to the GTP site; these read GRSNAGKS, GRTQL, DLPG, TKAD, and LFSA. Mg(2+) is bound by residues S45 and T66.

Belongs to the TRAFAC class TrmE-Era-EngA-EngB-Septin-like GTPase superfamily. EngB GTPase family. Mg(2+) serves as cofactor.

In terms of biological role, necessary for normal cell division and for the maintenance of normal septation. The polypeptide is Probable GTP-binding protein EngB (Pseudomonas putida (strain W619)).